A 271-amino-acid polypeptide reads, in one-letter code: MSTTGELYLRIAQDGDRSIAVDQYHRGALRVFRPLYLDGTGQVAYYVVNPGGGYLDGDSYLTEVEVLQGASAVLTTQAATKIYRTPTRPVRQDTRASLAPGAVLELVPDQVIAYRGASYRQTTLVEMDPTATFMSLEVLTPGWAPDGSAFGYDCVRMRTEIRVGGRCAVVDNLRLVPGEAGMAGLGALEGHSHLASFTALDARIDAALVTEIGELLEVDGVRGAVTRVPGPGLIARALGDDTTRLTALMLDISELLRDRWFGAPRLDLRKY.

Belongs to the UreD family. As to quaternary structure, ureD, UreF and UreG form a complex that acts as a GTP-hydrolysis-dependent molecular chaperone, activating the urease apoprotein by helping to assemble the nickel containing metallocenter of UreC. The UreE protein probably delivers the nickel.

The protein localises to the cytoplasm. Functionally, required for maturation of urease via the functional incorporation of the urease nickel metallocenter. The sequence is that of Urease accessory protein UreD from Actinomyces naeslundii.